A 347-amino-acid polypeptide reads, in one-letter code: Dihydroorotase (347 aa).

Residues His13 and His15 each contribute to the Zn(2+) site. Residues 15–17 (HLR) and Asn41 each bind substrate. Zn(2+) is bound by residues Lys99, His136, and His174. Position 99 is an N6-carboxylysine (Lys99). His136 contacts substrate. Residue Leu219 participates in substrate binding. Residue Asp247 coordinates Zn(2+). Asp247 is an active-site residue. 2 residues coordinate substrate: His251 and Ala263.

The protein belongs to the metallo-dependent hydrolases superfamily. DHOase family. Class II DHOase subfamily. Homodimer. Zn(2+) serves as cofactor.

The catalysed reaction is (S)-dihydroorotate + H2O = N-carbamoyl-L-aspartate + H(+). It functions in the pathway pyrimidine metabolism; UMP biosynthesis via de novo pathway; (S)-dihydroorotate from bicarbonate: step 3/3. In terms of biological role, catalyzes the reversible cyclization of carbamoyl aspartate to dihydroorotate. The sequence is that of Dihydroorotase from Sinorhizobium medicae (strain WSM419) (Ensifer medicae).